The sequence spans 302 residues: Proline dehydrogenase 1 (302 aa).

Position 95 (Lys-95) interacts with substrate. Asp-129 is an active-site residue. FAD-binding residues include Met-130 and Gln-158. Arg-179 is a catalytic residue. Residues 182–184 and 221–222 each bind FAD; these read KGA and TH. Substrate is bound at residue 283-284; that stretch reads RR.

This sequence belongs to the proline oxidase family. FAD serves as cofactor.

It catalyses the reaction L-proline + a quinone = (S)-1-pyrroline-5-carboxylate + a quinol + H(+). Its pathway is amino-acid degradation; L-proline degradation into L-glutamate; L-glutamate from L-proline: step 1/2. Its function is as follows. Converts proline to delta-1-pyrroline-5-carboxylate. This is Proline dehydrogenase 1 (fadM) from Bacillus subtilis subsp. natto.